Reading from the N-terminus, the 272-residue chain is Magnetosome protein MamQ 1 (272 aa).

Residues 1-46 are Cytoplasmic-facing; sequence MALGDANVGSAPGVDFSALQRVKQSEELLAQLYVVEETPRRLGRGP. Residues 47-67 traverse the membrane as a helical segment; the sequence is VHALMVISVLSVVAFIATLLM. At 68 to 272 the chain is on the lumenal side; that stretch reads RYNTFVTMSE…PLNHAQDIKK (205 aa).

The protein belongs to the LemA family.

It localises to the magnetosome membrane. Essential for magnetosome formation. Can be used to induce magnetosome formation. The chain is Magnetosome protein MamQ 1 (mamQ1) from Paramagnetospirillum magneticum (strain ATCC 700264 / AMB-1) (Magnetospirillum magneticum).